The sequence spans 251 residues: Cell division protein ZapD (251 aa).

The protein belongs to the ZapD family. In terms of assembly, interacts with FtsZ.

The protein localises to the cytoplasm. In terms of biological role, cell division factor that enhances FtsZ-ring assembly. Directly interacts with FtsZ and promotes bundling of FtsZ protofilaments, with a reduction in FtsZ GTPase activity. This chain is Cell division protein ZapD, found in Burkholderia ambifaria (strain MC40-6).